Consider the following 238-residue polypeptide: Metal-independent phosphoserine phosphatase (238 aa).

H32 functions as the Tele-phosphohistidine intermediate in the catalytic mechanism. E107 (proton donor/acceptor) is an active-site residue.

The protein belongs to the phosphoglycerate mutase family.

It catalyses the reaction O-phospho-L-serine + H2O = L-serine + phosphate. It carries out the reaction O-phospho-D-serine + H2O = D-serine + phosphate. Functionally, phosphoglycerate mutase-like protein lacking PGM activity, but having a low metal-independent phosphoserine phosphatase activity in vitro. May be involved in serine biosynthesis. This is Metal-independent phosphoserine phosphatase (IPSP) from Arabidopsis thaliana (Mouse-ear cress).